A 2620-amino-acid chain; its full sequence is Ankyrin repeat and KH domain-containing protein mask-1 (2620 aa).

ANK repeat units follow at residues S254–V283, N288–D318, E361–P390, E402–L431, I437–E466, K470–V502, T507–A536, K538–Q566, Q568–F597, D600–F629, N634–L663, and D667–M697. 3 disordered regions span residues K699–D726, H994–A1032, and S1192–K1229. A compositionally biased stretch (polar residues) spans T1012–Q1029. Residues S1192–Q1206 are compositionally biased toward low complexity. Basic and acidic residues predominate over residues T1210–K1221. ANK repeat units lie at residues T1234–H1263, K1267–A1296, T1301–H1330, S1334–S1363, L1369–A1398, N1403–H1432, T1436–A1465, T1471–V1500, K1504–M1533, and R1537–N1566. Residues A1596–E1648 are a coiled coil. 2 disordered regions span residues Q1621 to P1720 and K1759 to T1804. Over residues K1636 to A1647 the composition is skewed to basic and acidic residues. Positions E1648–P1661 are enriched in acidic residues. Composition is skewed to low complexity over residues P1665–E1681 and K1769–S1791. A KH domain is found at E1807–I1873. Residues A1899 to D1913 are compositionally biased toward polar residues. Disordered regions lie at residues A1899 to W1962, L1976 to E2010, S2067 to N2143, N2267 to G2294, S2307 to Q2343, Q2372 to M2391, Q2429 to Y2448, and Q2496 to W2620. Over residues A1917–S1946 the composition is skewed to low complexity. Polar residues predominate over residues I1982 to P1993. Composition is skewed to low complexity over residues S1994–D2006, S2067–Q2078, and S2100–S2118. Polar residues-rich tracts occupy residues N2267–P2286 and R2325–I2339. The span at S2505–R2528 shows a compositional bias: polar residues. Over residues R2535–P2547 the composition is skewed to pro residues. The segment covering S2552–T2565 has biased composition (polar residues). 2 stretches are compositionally biased toward low complexity: residues S2566–Q2588 and Q2597–W2620.

The protein belongs to the mask family.

The protein localises to the cytoplasm. The sequence is that of Ankyrin repeat and KH domain-containing protein mask-1 from Caenorhabditis elegans.